The following is a 238-amino-acid chain: Ubiquinone biosynthesis O-methyltransferase (238 aa).

S-adenosyl-L-methionine-binding residues include Arg39, Gly59, Asp80, and Met124.

This sequence belongs to the methyltransferase superfamily. UbiG/COQ3 family.

It catalyses the reaction a 3-demethylubiquinol + S-adenosyl-L-methionine = a ubiquinol + S-adenosyl-L-homocysteine + H(+). The enzyme catalyses a 3-(all-trans-polyprenyl)benzene-1,2-diol + S-adenosyl-L-methionine = a 2-methoxy-6-(all-trans-polyprenyl)phenol + S-adenosyl-L-homocysteine + H(+). It participates in cofactor biosynthesis; ubiquinone biosynthesis. O-methyltransferase that catalyzes the 2 O-methylation steps in the ubiquinone biosynthetic pathway. This Aeromonas salmonicida (strain A449) protein is Ubiquinone biosynthesis O-methyltransferase.